A 56-amino-acid chain; its full sequence is Small ribosomal subunit protein uS14 (56 aa).

Zn(2+) is bound by residues cysteine 21, cysteine 24, cysteine 39, and cysteine 42.

It belongs to the universal ribosomal protein uS14 family. In terms of assembly, component of the 40S small ribosomal subunit. Zn(2+) is required as a cofactor.

It localises to the cytoplasm. The protein resides in the cytosol. Its subcellular location is the rough endoplasmic reticulum. This is Small ribosomal subunit protein uS14 (RpS29) from Bombyx mori (Silk moth).